The chain runs to 427 residues: Probable fatty acid methyltransferase Rv3720 (427 aa).

S-adenosyl-L-methionine is bound by residues 167 to 168, 202 to 210, and 227 to 232; these read YT, LLDVGCGWG, and TLSAEQ.

The protein belongs to the CFA/CMAS family.

May be a S-adenosylmethionine-dependent methyltransferase involved in fatty acid metabolism. This Mycobacterium tuberculosis (strain ATCC 25618 / H37Rv) protein is Probable fatty acid methyltransferase Rv3720.